Reading from the N-terminus, the 477-residue chain is tRNA-2-methylthio-N(6)-dimethylallyladenosine synthase (477 aa).

The MTTase N-terminal domain occupies 3 to 120 (KKLHIKTWGC…LPAMIKQVQE (118 aa)). [4Fe-4S] cluster contacts are provided by cysteine 12, cysteine 49, cysteine 83, cysteine 157, cysteine 161, and cysteine 164. Positions 143–375 (RAEGATAFVS…QHVINNQSMQ (233 aa)) constitute a Radical SAM core domain. One can recognise a TRAM domain in the interval 378–441 (RAMLGSTQRI…PNSLRGRFIR (64 aa)).

It belongs to the methylthiotransferase family. MiaB subfamily. In terms of assembly, monomer. It depends on [4Fe-4S] cluster as a cofactor.

The protein localises to the cytoplasm. The catalysed reaction is N(6)-dimethylallyladenosine(37) in tRNA + (sulfur carrier)-SH + AH2 + 2 S-adenosyl-L-methionine = 2-methylsulfanyl-N(6)-dimethylallyladenosine(37) in tRNA + (sulfur carrier)-H + 5'-deoxyadenosine + L-methionine + A + S-adenosyl-L-homocysteine + 2 H(+). In terms of biological role, catalyzes the methylthiolation of N6-(dimethylallyl)adenosine (i(6)A), leading to the formation of 2-methylthio-N6-(dimethylallyl)adenosine (ms(2)i(6)A) at position 37 in tRNAs that read codons beginning with uridine. This Aeromonas salmonicida (strain A449) protein is tRNA-2-methylthio-N(6)-dimethylallyladenosine synthase.